We begin with the raw amino-acid sequence, 712 residues long: Lactoperoxidase (712 aa).

A signal peptide spans 1-21 (MLVCLHLQVFLASVALFEVAA). The propeptide occupies 22 to 117 (SDTIAQAAST…TDPSLDLTAL (96 aa)). An N-linked (GlcNAc...) (complex) asparagine; alternate glycan is attached at Asn-106. Residue Asn-106 is glycosylated (N-linked (GlcNAc...) (hybrid) asparagine; alternate). Cystine bridges form between Cys-123–Cys-284, Cys-132–Cys-145, Cys-246–Cys-256, and Cys-250–Cys-274. N-linked (GlcNAc...) (complex) asparagine; alternate glycosylation is present at Asn-212. Asn-212 carries an N-linked (GlcNAc...) (hybrid) asparagine; alternate glycan. Asp-225 lines the heme b pocket. His-226 acts as the Proton acceptor in catalysis. Asp-227 is a Ca(2+) binding site. Ca(2+)-binding residues include Thr-301, Phe-303, Asp-305, and Ser-307. Position 315 is a phosphoserine (Ser-315). Asn-322 carries N-linked (GlcNAc...) (high mannose) asparagine glycosylation. A disulfide bridge links Cys-354 with Cys-365. Asn-358 carries N-linked (GlcNAc...) asparagine glycosylation. Residue Glu-375 participates in heme b binding. Asn-449 carries N-linked (GlcNAc...) (complex) asparagine; alternate glycosylation. Asn-449 is a glycosylation site (N-linked (GlcNAc...) (hybrid) asparagine; alternate). A glycan (N-linked (GlcNAc...) (high mannose) asparagine; alternate) is linked at Asn-449. His-468 serves as a coordination point for heme b. At Tyr-482 the chain carries 3'-nitrotyrosine. Cystine bridges form between Cys-573–Cys-630 and Cys-671–Cys-696.

Belongs to the peroxidase family. XPO subfamily. It depends on Ca(2+) as a cofactor. Requires heme b as cofactor. Mammary gland; milk.

The protein resides in the secreted. Its subcellular location is the cytoplasm. The catalysed reaction is 2 a phenolic donor + H2O2 = 2 a phenolic radical donor + 2 H2O. It carries out the reaction thiocyanate + H2O2 + H(+) = hypothiocyanous acid + H2O. The enzyme catalyses iodide + H2O2 = hypoiodite + H2O. Inhibited by small molecule methimazole (MMZ). Its function is as follows. Heme-containing oxidoreductase which catalyzes the conversion of thiocyanate (SCN(-)) into antimicrobial agent hypothiocyanous acid (OSCN(-)) in the presence of hydrogen peroxide (H2O2). Also involved in the conversion of iodide (I(-)) into hypoiodite (IO(-)) in the presence of H2O2. Responsible for the inactivation of a wide range of micro-organisms and hence, important component of defense mechanism. Shows antibacterial properties against several Gram-positive bacteria including some Staphylococcus species and Gram-negative bacteria including E.coli, P.aeruginosa and some Salmonella species. Inhibits the growth of several fungi including A.niger, Trichoderma species, C.cassicola, P.meadii and C.salmonicolor. Does not have anti-fungal activity towards C.albicans and Pythium species. May protect the udder from infection and may promote growth in newborns. May be implicated in airway host defense against infection. May contribute to maintaining an appropriate H2O2 cellular level, therefore protecting cells from H2O2-caused injuries and inflammation. The protein is Lactoperoxidase (LPO) of Capra hircus (Goat).